We begin with the raw amino-acid sequence, 609 residues long: UvrABC system protein C (609 aa).

The 79-residue stretch at 13-91 folds into the GIY-YIG domain; the sequence is HEPGVYRMYD…IKLYQPRYNV (79 aa). The UVR domain maps to 201-236; sequence QQVLDYLIGKMEQASRNLDFEQAARYRDQIQAVRSV.

Belongs to the UvrC family. In terms of assembly, interacts with UvrB in an incision complex.

It is found in the cytoplasm. Its function is as follows. The UvrABC repair system catalyzes the recognition and processing of DNA lesions. UvrC both incises the 5' and 3' sides of the lesion. The N-terminal half is responsible for the 3' incision and the C-terminal half is responsible for the 5' incision. The protein is UvrABC system protein C of Haemophilus influenzae (strain 86-028NP).